The chain runs to 395 residues: MTEPETLALLEVKGPETLEKSPPQALVPNGRKLEGEDEVESLGAESSRVGSSAESPTAREGTEDGLDSTVSEAATLPWGTGPQPSAPFPDPPGWRNIEPEPPESEPPTKLEELPEDEASLLPEKAARAFVPIDLQCIERRPQEDLVVCCEASEGEHRRTFLPPRATHPEPPECKWAEAVVKPPGHSCGGCGGCGGREALRAVASVGAALILFPCLLYGAYAFLPFDAPRLPTMSSRLIYTLRCGVFATFPIVLGILVYGLSLLCFAALRPFGEPRREVEIHRQYVAQSVQLFILYFFNLAVLSTYLPQDALKLLPLLTGLFAISRLIYWLTFAVGRSFRGFGYGLTFLPLLSMLLWNFYYMFVVEPERMLTASESRLDYPDHARSASDYRPRSRG.

Residues 1 to 115 form a disordered region; that stretch reads MTEPETLALL…PPTKLEELPE (115 aa). Over 1–204 the chain is Cytoplasmic; the sequence is MTEPETLALL…GREALRAVAS (204 aa). A helical transmembrane segment spans residues 205 to 225; it reads VGAALILFPCLLYGAYAFLPF. Residues 226–244 are Extracellular-facing; it reads DAPRLPTMSSRLIYTLRCG. A helical membrane pass occupies residues 245–265; it reads VFATFPIVLGILVYGLSLLCF. Topologically, residues 266–290 are cytoplasmic; it reads AALRPFGEPRREVEIHRQYVAQSVQ. Residues 291–311 form a helical membrane-spanning segment; that stretch reads LFILYFFNLAVLSTYLPQDAL. At 312 to 313 the chain is on the extracellular side; it reads KL. A helical membrane pass occupies residues 314-334; the sequence is LPLLTGLFAISRLIYWLTFAV. At 335 to 343 the chain is on the cytoplasmic side; the sequence is GRSFRGFGY. Residues 344 to 364 traverse the membrane as a helical segment; that stretch reads GLTFLPLLSMLLWNFYYMFVV. The Extracellular portion of the chain corresponds to 365–395; the sequence is EPERMLTASESRLDYPDHARSASDYRPRSRG.

The protein resides in the lysosome. Its subcellular location is the golgi apparatus. It localises to the trans-Golgi network. It is found in the membrane. Its function is as follows. Contributes to the epidermal integrity and skin barrier function. Plays a role in the lamellar granule (LG) secretory system and in the stratum corneum (SC) epithelial cell formation. This Bos taurus (Bovine) protein is Transmembrane protein 79 (TMEM79).